Consider the following 341-residue polypeptide: S-adenosylmethionine:tRNA ribosyltransferase-isomerase (341 aa).

This sequence belongs to the QueA family. In terms of assembly, monomer.

It localises to the cytoplasm. It catalyses the reaction 7-aminomethyl-7-carbaguanosine(34) in tRNA + S-adenosyl-L-methionine = epoxyqueuosine(34) in tRNA + adenine + L-methionine + 2 H(+). It participates in tRNA modification; tRNA-queuosine biosynthesis. Its function is as follows. Transfers and isomerizes the ribose moiety from AdoMet to the 7-aminomethyl group of 7-deazaguanine (preQ1-tRNA) to give epoxyqueuosine (oQ-tRNA). In Trichlorobacter lovleyi (strain ATCC BAA-1151 / DSM 17278 / SZ) (Geobacter lovleyi), this protein is S-adenosylmethionine:tRNA ribosyltransferase-isomerase.